The chain runs to 215 residues: Glycerol-3-phosphate acyltransferase (215 aa).

A run of 5 helical transmembrane segments spans residues 1–21 (MAFL…SIPT), 57–77 (IFVL…VKLW), 85–105 (MIPL…AVLG), 126–146 (VLLV…LAML), and 165–185 (VLMF…IVGL).

It belongs to the PlsY family. As to quaternary structure, probably interacts with PlsX.

Its subcellular location is the cell inner membrane. The enzyme catalyses an acyl phosphate + sn-glycerol 3-phosphate = a 1-acyl-sn-glycero-3-phosphate + phosphate. It functions in the pathway lipid metabolism; phospholipid metabolism. Functionally, catalyzes the transfer of an acyl group from acyl-phosphate (acyl-PO(4)) to glycerol-3-phosphate (G3P) to form lysophosphatidic acid (LPA). This enzyme utilizes acyl-phosphate as fatty acyl donor, but not acyl-CoA or acyl-ACP. This Crocosphaera subtropica (strain ATCC 51142 / BH68) (Cyanothece sp. (strain ATCC 51142)) protein is Glycerol-3-phosphate acyltransferase.